Here is a 191-residue protein sequence, read N- to C-terminus: Thymidine kinase (191 aa).

Residues 15 to 22 (GSMFSGKS) and 88 to 91 (DEVQ) contribute to the ATP site. Glutamate 89 (proton acceptor) is an active-site residue. 4 residues coordinate Zn(2+): cysteine 145, cysteine 148, cysteine 183, and histidine 186.

Belongs to the thymidine kinase family. As to quaternary structure, homotetramer.

Its subcellular location is the cytoplasm. The enzyme catalyses thymidine + ATP = dTMP + ADP + H(+). This Macrococcus caseolyticus (strain JCSC5402) (Macrococcoides caseolyticum) protein is Thymidine kinase.